The following is a 61-amino-acid chain: Alpha-conotoxin-like Tx1.2 (61 aa).

A signal peptide spans 1–20 (MFTVFLLVVLATTVVSFTSG). The propeptide occupies 21-42 (RSTFRGRNAAAKASGLVSLTDR). 4-hydroxyproline is present on residues Pro-44 and Pro-50. 2 cysteine pairs are disulfide-bonded: Cys-46-Cys-52 and Cys-47-Cys-60. Residues 48-50 (SHP) form a ser-Xaa-Pro motif, crucial for potent interaction with nAChR region.

This sequence belongs to the conotoxin A superfamily. In terms of tissue distribution, expressed by the venom duct.

The protein localises to the secreted. Functionally, alpha-conotoxins act on postsynaptic membranes, they bind to the nicotinic acetylcholine receptors (nAChR) and thus inhibit them. This toxin also inhibits high voltage-activated (HVA) calcium channel currents in rat DRG neurons (8% inhibition at 1 uM toxin) probably by activating GABA(B) receptors (GABBR1 and/or GABBR2). The protein is Alpha-conotoxin-like Tx1.2 of Conus textile (Cloth-of-gold cone).